A 412-amino-acid polypeptide reads, in one-letter code: MVEKIIVSNPVANLLGDEQTRVIWDLIEKKLIFPFLDLKVETYDLGIEYRDKTNDQVTIDAANAIKRLKVGIKCATITPDEARVTEFGLKEMWKSPNGTIRNTLGGTLFREPIVCKNVPRLVTCWNKSIVIGRHAFGDQYRATDFVVKGAGKLELTYTPADGSAPQKFQVFDFPSDGGVALGMYNTDASIKEFAYACFNFSLDKKWPLYLSTKNTILKRYDGRFKDIFQEIYEREYKVKFDTAGIWYEHRLIDDMVAYAMKSEGGFVWACKNYDGDVQSDAVAQGYGSLGLMTSVLLSADSLVAEASHGTVTRHFREHQKGRETSTNSIASIFAWTRGLEYRAKLDNNDKLLKFCHALEASCIDAVESGFMTKDLAICVKGSVENVKRTDYLNTEEYINKVAELLVSKLTAL.

Residues 76–78 (TIT) and R83 contribute to the NADP(+) site. Substrate is bound at residue T78. Substrate contacts are provided by residues 95 to 101 (SPNGTIR), R110, and R133. D253 provides a ligand contact to Mn(2+). An NADP(+)-binding site is contributed by K261. D276 contributes to the Mn(2+) binding site. Residues 309-314 (GTVTRH) and N327 contribute to the NADP(+) site.

It belongs to the isocitrate and isopropylmalate dehydrogenases family. Homodimer. Mg(2+) is required as a cofactor. It depends on Mn(2+) as a cofactor.

It is found in the cytoplasm. It catalyses the reaction D-threo-isocitrate + NADP(+) = 2-oxoglutarate + CO2 + NADPH. In Dictyostelium discoideum (Social amoeba), this protein is Isocitrate dehydrogenase [NADP] cytoplasmic (idhC).